Here is a 617-residue protein sequence, read N- to C-terminus: Putative type VI secretion system protein VgrGB (617 aa).

The segment at 449–469 is disordered; sequence RTFHATNPSPYPLPASKTRTS.

The protein belongs to the VgrG protein family.

In terms of biological role, a Vgr protein that is probably part of a type VI secretion system (T6SS). May be required for export of proteins involved in Rhs-mediated cellular contact-dependent growth inhibition (CDI). The chain is Putative type VI secretion system protein VgrGB (vgrGB) from Dickeya dadantii (strain 3937) (Erwinia chrysanthemi (strain 3937)).